The primary structure comprises 252 residues: Indole-3-glycerol phosphate synthase (252 aa).

The protein belongs to the TrpC family.

It catalyses the reaction 1-(2-carboxyphenylamino)-1-deoxy-D-ribulose 5-phosphate + H(+) = (1S,2R)-1-C-(indol-3-yl)glycerol 3-phosphate + CO2 + H2O. It participates in amino-acid biosynthesis; L-tryptophan biosynthesis; L-tryptophan from chorismate: step 4/5. The sequence is that of Indole-3-glycerol phosphate synthase from Listeria monocytogenes serovar 1/2a (strain ATCC BAA-679 / EGD-e).